The following is a 354-amino-acid chain: Guanine nucleotide-binding protein G(t) subunit alpha-2 (354 aa).

The segment at 1–27 (MGSGASAEDKELAKRSKELEKKLQEDA) is disordered. The N-myristoyl glycine moiety is linked to residue Gly-2. Residues 7-27 (AEDKELAKRSKELEKKLQEDA) are compositionally biased toward basic and acidic residues. The G-alpha domain maps to 32 to 354 (KTVKLLLLGA…KENLKDCGLF (323 aa)). The G1 motif stretch occupies residues 35-48 (KLLLLGAGESGKST). GTP-binding positions include 40–47 (GAGESGKS), 175–181 (LRSRVKT), 200–204 (DVGGQ), 269–272 (NKKD), and Ala-326. Residue Ser-47 participates in Mg(2+) binding. Residues 173–181 (DVLRSRVKT) form a G2 motif region. Arg-178 bears the ADP-ribosylarginine; by cholera toxin mark. Thr-181 contacts Mg(2+). The tract at residues 196–205 (FRMFDVGGQR) is G3 motif. The tract at residues 265–272 (VLFLNKKD) is G4 motif. Residues 324–329 (TCATDT) form a G5 motif region. An ADP-ribosylcysteine; by pertussis toxin modification is found at Cys-351.

The protein belongs to the G-alpha family. G(i/o/t/z) subfamily. In terms of assembly, g proteins are composed of 3 units; alpha, beta and gamma. The alpha chain contains the guanine nucleotide binding site. In terms of tissue distribution, retinal rod outer segment.

The protein localises to the cell projection. It is found in the cilium. Its subcellular location is the photoreceptor outer segment. The protein resides in the photoreceptor inner segment. In terms of biological role, guanine nucleotide-binding proteins (G proteins) are involved as modulators or transducers in various transmembrane signaling systems. Transducin is an amplifier and one of the transducers of a visual impulse that performs the coupling between rhodopsin and cGMP-phosphodiesterase. This chain is Guanine nucleotide-binding protein G(t) subunit alpha-2 (GNAT2), found in Homo sapiens (Human).